We begin with the raw amino-acid sequence, 346 residues long: N-acetyl-gamma-glutamyl-phosphate reductase (346 aa).

Cysteine 149 is a catalytic residue.

This sequence belongs to the NAGSA dehydrogenase family. Type 1 subfamily.

It localises to the cytoplasm. The enzyme catalyses N-acetyl-L-glutamate 5-semialdehyde + phosphate + NADP(+) = N-acetyl-L-glutamyl 5-phosphate + NADPH + H(+). The protein operates within amino-acid biosynthesis; L-arginine biosynthesis; N(2)-acetyl-L-ornithine from L-glutamate: step 3/4. Functionally, catalyzes the NADPH-dependent reduction of N-acetyl-5-glutamyl phosphate to yield N-acetyl-L-glutamate 5-semialdehyde. This chain is N-acetyl-gamma-glutamyl-phosphate reductase, found in Saccharophagus degradans (strain 2-40 / ATCC 43961 / DSM 17024).